We begin with the raw amino-acid sequence, 215 residues long: Nucleoredoxin-like protein 1 (215 aa).

The 165-residue stretch at 1–165 folds into the Thioredoxin; atypical domain; sequence MADLFLDKIL…VSEIIDRSFL (165 aa). Over residues 185–194 the composition is skewed to basic and acidic residues; sequence IKYKDETTNE. Residues 185 to 215 are disordered; sequence IKYKDETTNEKKKRKHCDDEDEGGGGGTEFF.

The protein belongs to the nucleoredoxin family.

It is found in the cell projection. The protein localises to the cilium. Its subcellular location is the photoreceptor outer segment. Plays an important role in retinal cone photoreceptor survival. May play a role in cone cell viability, slowing down cone degeneration, does not seem to play a role in degenerating rods. The chain is Nucleoredoxin-like protein 1 (nxnl1) from Xenopus laevis (African clawed frog).